Here is a 268-residue protein sequence, read N- to C-terminus: MKKGKAKETKTIDVDKQEKKSVRIRRVKTGFLFSGILIPLVCVVAIPLSLNKNYSLKRTKYFTDDRTLYSIDKNTIKENNKTYKVITLTSKSLNVSDIMSESARYMNIPQKSFNNSVTYSNKINIRTNTNLLKNTKINETKVTKITNSNQTIFKLDLIQLWNEINSKSNNKISEFDFLSNIESINNAMTYSYIKNNKLFYFDNKQGYSGYIIQKFFENFDVEIRKENLKNKNVNVLEAFISSTIELNESLTEIKKITFDTKITLKYEI.

This is an uncharacterized protein from Metamycoplasma hominis (strain ATCC 23114 / DSM 25592 / NBRC 14850 / NCTC 10111 / PG21) (Mycoplasma hominis).